We begin with the raw amino-acid sequence, 203 residues long: Large ribosomal subunit protein bL25 (203 aa).

The protein belongs to the bacterial ribosomal protein bL25 family. CTC subfamily. Part of the 50S ribosomal subunit; part of the 5S rRNA/L5/L18/L25 subcomplex. Contacts the 5S rRNA. Binds to the 5S rRNA independently of L5 and L18.

Its function is as follows. This is one of the proteins that binds to the 5S RNA in the ribosome where it forms part of the central protuberance. This chain is Large ribosomal subunit protein bL25, found in Xanthobacter autotrophicus (strain ATCC BAA-1158 / Py2).